The following is a 57-amino-acid chain: Large ribosomal subunit protein bL32 (57 aa).

Residues 1 to 19 (MAVPKRRMSRANTRSRRAQ) show a composition bias toward basic residues. Residues 1–20 (MAVPKRRMSRANTRSRRAQW) form a disordered region.

The protein belongs to the bacterial ribosomal protein bL32 family.

The protein is Large ribosomal subunit protein bL32 of Mycobacterium avium (strain 104).